Here is a 484-residue protein sequence, read N- to C-terminus: MDLTNRMMEPEEFARQRQEVLNQWATGRDVDFEEAVAYHKNLPRSKNFSYKLAEGKARGITFAQPRAGVALLNEHLELLRFLEEEGEADFLPTTIDSYTRQNRYAEAQTGIDESRLVGRSMLNGFPAVNHGVSACRRLIEHPKVPVQVRHGTPDARLLAEITLAGGFTAYEGGGISYNIPYAKDVSIEKSIKYWQYVDRLVGMYEEKGVSINREPFGPLTGTLVPPSVSHGVAVIEGILAVAQGVRSLTLGYGQCGNLLQDVAAIRTLPLLAAEYLSKLGYTDFDITTVFHQWMGGFPQDEAKAYGVISWGAAAAALGKATKVIVKSPHEALGIPTKEANAAGIRTTKQILNMLKDQSLPMTEELALEEKMIREETRAILDRTLDLGEGDMAVGAVRAFQAGVIDVPFAPSRYNGGRILPARDSQGAVRVLDFGNLPFSEEIKEFHRERIARRGRDEGREPSFQMVIDDIYAIGKGMLVGRPRS.

Arg66 is an L-glutamate binding site. An adenosylcob(III)alamin-binding site is contributed by Gly68. Residue Arg100 participates in L-glutamate binding. Residue Asn123 participates in adenosylcob(III)alamin binding. Residues 149-150 (RH), Glu171, and Tyr177 contribute to the L-glutamate site. Position 180 (Pro180) interacts with adenosylcob(III)alamin. An L-glutamate-binding site is contributed by Tyr181. Adenosylcob(III)alamin contacts are provided by Phe297, Lys326, Glu330, and Ile334.

Belongs to the methylaspartate mutase GlmE subunit family. Heterotetramer composed of 2 epsilon subunits (GlmE) and 2 sigma subunits (GlmS). GlmE exists as a homodimer and GlmS as a monomer. The cofactor is adenosylcob(III)alamin.

It catalyses the reaction (2S,3S)-3-methyl-L-aspartate = L-glutamate. The protein operates within amino-acid degradation; L-glutamate degradation via mesaconate pathway; acetate and pyruvate from L-glutamate: step 1/4. Functionally, catalyzes the carbon skeleton rearrangement of L-glutamate to L-threo-3-methylaspartate ((2S,3S)-3-methylaspartate). The sequence is that of Glutamate mutase epsilon subunit from Desulfitobacterium hafniense (strain Y51).